A 400-amino-acid chain; its full sequence is Forkhead box protein A4-B (400 aa).

The segment at residues 119 to 213 (KPPYSYISLI…ENGCYLRRQK (95 aa)) is a DNA-binding region (fork-head). The segment covering 218–234 (ERSKSGEGERKGNKPGD) has biased composition (basic and acidic residues). Positions 218 to 290 (ERSKSGEGER…VGFSPTSEQA (73 aa)) are disordered. Composition is skewed to polar residues over residues 249-258 (DCSSSRSPQA) and 267-277 (STGSSIHQATG).

As to expression, primarily expressed in the dorsal blastopore lip (Spemann organizer) of early gastrulae. At later stages, expressed in the dorsal mesoderm and the neural floor plate. In the dorsal mesoderm, expressed in the notochord but not in the presomitic mesoderm. Also expressed in the mid-brain area.

The protein localises to the nucleus. Its function is as follows. Transcriptional repressor involved in embryonic nervous system development. Plays a role in the induction and patterning of the anterior-posterior neural axis. Involved in the establishment of floor plate differentiation from neural plate cells during gastrulation. Binds the anf1 promoter sequence to restrict expression of anf1 to the anterior of the neural plate, thereby patterning the forebrain. Can bind to the HNF-3-alpha DNA target sequence. Cooperates with t/bra in a dose-dependent manner to specify dorsal mesoderm formation, including notochord. May be involved in the dorso-ventral patterning of the mesoderm. Binds to DNA via the target sequence 5'-[GA]TAAA[TC]A-3', with 5'-GTAAATA-3' being the preferred binding site. The protein is Forkhead box protein A4-B (foxa4-b) of Xenopus laevis (African clawed frog).